We begin with the raw amino-acid sequence, 212 residues long: Pyridoxine/pyridoxamine 5'-phosphate oxidase (212 aa).

Residues 1 to 20 (MSDSAMEPQNPLTSGDFTAA) are disordered. FMN-binding positions include 59-64 (RMVLLK), 74-75 (YT), Lys-81, and Gln-103. Lys-64 is a binding site for substrate. 3 residues coordinate substrate: Tyr-121, Arg-125, and Ser-129. Residues 138-139 (QS) and Trp-183 each bind FMN. Residue 189 to 191 (RLH) coordinates substrate. Arg-193 is an FMN binding site.

Belongs to the pyridoxamine 5'-phosphate oxidase family. Homodimer. The cofactor is FMN.

It catalyses the reaction pyridoxamine 5'-phosphate + O2 + H2O = pyridoxal 5'-phosphate + H2O2 + NH4(+). It carries out the reaction pyridoxine 5'-phosphate + O2 = pyridoxal 5'-phosphate + H2O2. It participates in cofactor metabolism; pyridoxal 5'-phosphate salvage; pyridoxal 5'-phosphate from pyridoxamine 5'-phosphate: step 1/1. The protein operates within cofactor metabolism; pyridoxal 5'-phosphate salvage; pyridoxal 5'-phosphate from pyridoxine 5'-phosphate: step 1/1. In terms of biological role, catalyzes the oxidation of either pyridoxine 5'-phosphate (PNP) or pyridoxamine 5'-phosphate (PMP) into pyridoxal 5'-phosphate (PLP). This Azorhizobium caulinodans (strain ATCC 43989 / DSM 5975 / JCM 20966 / LMG 6465 / NBRC 14845 / NCIMB 13405 / ORS 571) protein is Pyridoxine/pyridoxamine 5'-phosphate oxidase.